We begin with the raw amino-acid sequence, 207 residues long: Cytochrome c biogenesis ATP-binding export protein CcmA (207 aa).

One can recognise an ABC transporter domain in the interval 4-207 (LEARELLCER…RISLTQTRAA (204 aa)). 36 to 43 (GSNGAGKT) lines the ATP pocket.

It belongs to the ABC transporter superfamily. CcmA exporter (TC 3.A.1.107) family. In terms of assembly, the complex is composed of two ATP-binding proteins (CcmA) and two transmembrane proteins (CcmB).

It is found in the cell inner membrane. It carries out the reaction heme b(in) + ATP + H2O = heme b(out) + ADP + phosphate + H(+). In terms of biological role, part of the ABC transporter complex CcmAB involved in the biogenesis of c-type cytochromes; once thought to export heme, this seems not to be the case, but its exact role is uncertain. Responsible for energy coupling to the transport system. The protein is Cytochrome c biogenesis ATP-binding export protein CcmA of Shigella boydii serotype 4 (strain Sb227).